Here is a 346-residue protein sequence, read N- to C-terminus: Small ribosomal subunit biogenesis GTPase RsgA (346 aa).

The disordered stretch occupies residues 1–26 (MAKRKLTQNQTRRIQSNNAKTLHRHK). Residues 7–20 (TQNQTRRIQSNNAK) show a composition bias toward polar residues. One can recognise a CP-type G domain in the interval 103 to 271 (ENEISRPDYY…LIDSPGIREF (169 aa)). Residues 159–162 (NKVD) and 213–221 (GQSGVGKSS) contribute to the GTP site. 4 residues coordinate Zn(2+): Cys-295, Cys-300, His-302, and Cys-308.

The protein belongs to the TRAFAC class YlqF/YawG GTPase family. RsgA subfamily. As to quaternary structure, monomer. Associates with 30S ribosomal subunit, binds 16S rRNA. The cofactor is Zn(2+).

The protein localises to the cytoplasm. Its function is as follows. One of several proteins that assist in the late maturation steps of the functional core of the 30S ribosomal subunit. Helps release RbfA from mature subunits. May play a role in the assembly of ribosomal proteins into the subunit. Circularly permuted GTPase that catalyzes slow GTP hydrolysis, GTPase activity is stimulated by the 30S ribosomal subunit. This is Small ribosomal subunit biogenesis GTPase RsgA from Haemophilus influenzae (strain PittGG).